Consider the following 151-residue polypeptide: Probable cGMP 3',5'-cyclic phosphodiesterase subunit delta (151 aa).

This sequence belongs to the PDE6D/unc-119 family. In terms of assembly, interacts with Pde6.

The protein resides in the nucleus. It localises to the cytoplasm. The protein is Probable cGMP 3',5'-cyclic phosphodiesterase subunit delta of Drosophila erecta (Fruit fly).